The primary structure comprises 140 residues: Putative 6-pyruvoyl tetrahydrobiopterin synthase (140 aa).

His19 lines the Zn(2+) pocket. Cys38 serves as the catalytic Proton acceptor. Residues His44 and His46 each contribute to the Zn(2+) site. Active-site charge relay system residues include His84 and Glu129.

Belongs to the PTPS family. In terms of assembly, homohexamer formed of two homotrimers in a head to head fashion. Zn(2+) serves as cofactor.

The enzyme catalyses 7,8-dihydroneopterin 3'-triphosphate = 6-pyruvoyl-5,6,7,8-tetrahydropterin + triphosphate + H(+). It participates in cofactor biosynthesis; tetrahydrobiopterin biosynthesis; tetrahydrobiopterin from 7,8-dihydroneopterin triphosphate: step 1/3. Its function is as follows. Involved in the biosynthesis of tetrahydrobiopterin, an essential cofactor of aromatic amino acid hydroxylases. Catalyzes the transformation of 7,8-dihydroneopterin triphosphate into 6-pyruvoyl tetrahydropterin. This Caenorhabditis elegans protein is Putative 6-pyruvoyl tetrahydrobiopterin synthase (ptps-1).